We begin with the raw amino-acid sequence, 172 residues long: Centrin-2 (172 aa).

A disordered region spans residues 1–30 (MASNFKKANMASSSQRKRMSPKPELTEEQK). An N-acetylalanine modification is found at alanine 2. The interval 2–25 (ASNFKKANMASSSQRKRMSPKPEL) is required for self-assembly. Phosphoserine is present on serine 20. Lysine 22 participates in a covalent cross-link: Glycyl lysine isopeptide (Lys-Gly) (interchain with G-Cter in SUMO2). Threonine 26 bears the Phosphothreonine mark. EF-hand domains lie at 28 to 63 (EQKQ…LGFE), 64 to 99 (PKKE…KMSE), 101 to 136 (DTKE…LGEN), and 137 to 172 (LTDE…TSLY). 5 residues coordinate Ca(2+): aspartate 41, aspartate 43, threonine 45, threonine 47, and glutamate 52. Ca(2+) is bound by residues aspartate 150, aspartate 152, aspartate 154, glutamate 156, and glutamate 161.

The protein belongs to the centrin family. In terms of assembly, monomer. Homooligomer. Interacts with SFI1. Interacts with CCP110. Component of the XPC complex composed of XPC, RAD23B and CETN2. Component of the nuclear pore complex (NPC)-associated TREX-2 complex (transcription and export complex 2), composed of at least GANP, 2 copies of ENY2, PCID2, SEM1/DSS1, and either centrin CETN2 or centrin CETN3. The TREX-2 complex also associates with ALYREF/ALY and with the nucleoporin NUP153. Interacts with USP49. Forms a microtubule-associated complex with POC5, POC1B and FAM161A. Interacts with CCDC15.

It is found in the cytoplasm. The protein resides in the cytoskeleton. Its subcellular location is the microtubule organizing center. It localises to the centrosome. The protein localises to the centriole. It is found in the nucleus envelope. The protein resides in the nucleus. Its subcellular location is the nuclear pore complex. Functionally, plays a fundamental role in microtubule organizing center structure and function. Required for centriole duplication and correct spindle formation. Has a role in regulating cytokinesis and genome stability via cooperation with CALM1 and CCP110. Involved in global genome nucleotide excision repair (GG-NER) by acting as component of the XPC complex. Cooperatively with RAD23B appears to stabilize XPC. In vitro, stimulates DNA binding of the XPC:RAD23B dimer. Its function is as follows. The XPC complex is proposed to represent the first factor bound at the sites of DNA damage and together with other core recognition factors, XPA, RPA and the TFIIH complex, is part of the pre-incision (or initial recognition) complex. The XPC complex recognizes a wide spectrum of damaged DNA characterized by distortions of the DNA helix such as single-stranded loops, mismatched bubbles or single-stranded overhangs. The orientation of XPC complex binding appears to be crucial for inducing a productive NER. XPC complex is proposed to recognize and to interact with unpaired bases on the undamaged DNA strand which is followed by recruitment of the TFIIH complex and subsequent scanning for lesions in the opposite strand in a 5'-to-3' direction by the NER machinery. Cyclobutane pyrimidine dimers (CPDs) which are formed upon UV-induced DNA damage esacpe detection by the XPC complex due to a low degree of structural perurbation. Instead they are detected by the UV-DDB complex which in turn recruits and cooperates with the XPC complex in the respective DNA repair. In terms of biological role, as a component of the TREX-2 complex, involved in the export of mRNAs to the cytoplasm through the nuclear pores. The protein is Centrin-2 (CETN2) of Homo sapiens (Human).